A 649-amino-acid chain; its full sequence is Lipoteichoic acid synthase 2 (649 aa).

Residues 1 to 9 lie on the Cytoplasmic side of the membrane; the sequence is MKTFIKERG. The chain crosses the membrane as a helical span at residues 10–30; it reads LAFFLIAVVLLWIKTYVGYVL. Over 31–42 the chain is Extracellular; it reads NFNLGIDNTIQK. The chain crosses the membrane as a helical span at residues 43 to 63; the sequence is ILLFVNPLSSSLFFLGFGLLF. Residues 64-69 lie on the Cytoplasmic side of the membrane; the sequence is KKKLQQ. A helical membrane pass occupies residues 70 to 90; that stretch reads TAIIVIHFLMSFLLYANIVYY. Over 91-118 the chain is Extracellular; it reads RFFNDFITIPVIMQAKTNGGQLGDSAFS. Residues 119 to 139 traverse the membrane as a helical segment; that stretch reads LMRPTDAFYFIDTIILIILAI. At 140-151 the chain is on the cytoplasmic side; that stretch reads KVNKPAETSSKK. Residues 152–172 form a helical membrane-spanning segment; that stretch reads SFRIIFASSILVFLINLAVAE. Over 173 to 649 the chain is Extracellular; sequence SDRPELLTRS…SETSKDNEDK (477 aa). Residues Glu-253 and Thr-297 each contribute to the Mn(2+) site. Thr-297 is an active-site residue. His-412 serves as a coordination point for substrate. The Mn(2+) site is built by Asp-471 and His-472. Residues 622 to 649 are disordered; that stretch reads FKKVNPSDYDYTKHDEDSSETSKDNEDK. Residues 631–649 are compositionally biased toward basic and acidic residues; the sequence is DYTKHDEDSSETSKDNEDK.

Belongs to the LTA synthase family. Proteolytically cleaved.

Its subcellular location is the cell membrane. The protein resides in the secreted. It functions in the pathway cell wall biogenesis; lipoteichoic acid biosynthesis. Catalyzes the polymerization of lipoteichoic acid (LTA) polyglycerol phosphate, a reaction that presumably uses phosphatidylglycerol (PG) as substrate. The sequence is that of Lipoteichoic acid synthase 2 (ltaS2) from Bacillus subtilis (strain 168).